We begin with the raw amino-acid sequence, 484 residues long: Protein nucleotidyltransferase YdiU (484 aa).

ATP contacts are provided by Gly-81, Gly-83, Arg-84, Lys-103, Asp-115, Gly-116, Arg-166, and Arg-173. Asp-244 (proton acceptor) is an active-site residue. Asn-245 and Asp-254 together coordinate Mg(2+). Asp-254 is an ATP binding site.

This sequence belongs to the SELO family. It depends on Mg(2+) as a cofactor. The cofactor is Mn(2+).

The catalysed reaction is L-seryl-[protein] + ATP = 3-O-(5'-adenylyl)-L-seryl-[protein] + diphosphate. The enzyme catalyses L-threonyl-[protein] + ATP = 3-O-(5'-adenylyl)-L-threonyl-[protein] + diphosphate. It carries out the reaction L-tyrosyl-[protein] + ATP = O-(5'-adenylyl)-L-tyrosyl-[protein] + diphosphate. It catalyses the reaction L-histidyl-[protein] + UTP = N(tele)-(5'-uridylyl)-L-histidyl-[protein] + diphosphate. The catalysed reaction is L-seryl-[protein] + UTP = O-(5'-uridylyl)-L-seryl-[protein] + diphosphate. The enzyme catalyses L-tyrosyl-[protein] + UTP = O-(5'-uridylyl)-L-tyrosyl-[protein] + diphosphate. Nucleotidyltransferase involved in the post-translational modification of proteins. It can catalyze the addition of adenosine monophosphate (AMP) or uridine monophosphate (UMP) to a protein, resulting in modifications known as AMPylation and UMPylation. This is Protein nucleotidyltransferase YdiU from Shewanella sp. (strain MR-7).